We begin with the raw amino-acid sequence, 731 residues long: Vezatin (731 aa).

Transmembrane regions (helical) follow at residues 91–111 (LATP…LLVM) and 114–134 (TWWI…YLVI). A coiled-coil region spans residues 382 to 414 (VRSLQLHLKALLNEVIILEDELEKLVCTKETQE). Disordered stretches follow at residues 570-671 (PVDP…DSLQ) and 710-731 (QTFG…IEEK). Residues 577–586 (ISNSEPSMNS) show a composition bias toward polar residues. Residues 590-601 (KVSKNDTEEESS) are compositionally biased toward basic and acidic residues. Residues 658 to 671 (GLTTAPPTPRDSLQ) are compositionally biased toward polar residues. Residues 712–721 (FGDEEEEQII) are compositionally biased toward acidic residues. The span at 722–731 (EENKNKIEEK) shows a compositional bias: basic and acidic residues.

It belongs to the vezatin family. As to quaternary structure, interacts with USH2A (via the cytoplasmic region); the interaction associates VEZT with the USH2 complex at the stereocilia base. Interacts with myosin MYO7A and the cadherin-catenins complex.

It is found in the cell membrane. It localises to the cell projection. Its subcellular location is the stereocilium membrane. The protein resides in the cell junction. The protein localises to the adherens junction. It is found in the nucleus. It localises to the cytoplasmic vesicle. Its subcellular location is the secretory vesicle. The protein resides in the acrosome. Its function is as follows. Plays a pivotal role in the establishment of adherens junctions and their maintenance in adult life. Required for morphogenesis of the preimplantation embryo, and for the implantation process. This chain is Vezatin (VEZT), found in Pongo abelii (Sumatran orangutan).